A 303-amino-acid chain; its full sequence is Small ribosomal subunit protein uS2 (303 aa).

The segment at 267 to 303 is disordered; sequence AESLSMAEEPAPPSQRKGPASETAEPVAEPAVTESGS.

It belongs to the universal ribosomal protein uS2 family.

In Solibacter usitatus (strain Ellin6076), this protein is Small ribosomal subunit protein uS2.